Consider the following 423-residue polypeptide: Probable peptidoglycan glycosyltransferase FtsW (423 aa).

Residues Met1–Leu53 are Cytoplasmic-facing. Residues Leu54–Ile74 traverse the membrane as a helical segment. Residues Thr75 to Asn88 are Periplasmic-facing. Residues Phe89–Phe109 traverse the membrane as a helical segment. Residues Lys110–Tyr119 are Cytoplasmic-facing. Residues Ser120–Gly140 traverse the membrane as a helical segment. Over Arg141–Trp149 the chain is Periplasmic. Residues Ile150 to Phe170 form a helical membrane-spanning segment. Residues Ala171–Ser184 are Cytoplasmic-facing. A helical membrane pass occupies residues Phe185–Ala205. Residues Glu206 to Asp208 lie on the Periplasmic side of the membrane. The helical transmembrane segment at Met209–Asn229 threads the bilayer. Over Ala230–Lys231 the chain is Cytoplasmic. The helical transmembrane segment at Leu232–Pro252 threads the bilayer. The Periplasmic segment spans residues Leu253–Asp310. The chain crosses the membrane as a helical span at residues Phe311–Leu331. Residues Phe332–Lys359 are Cytoplasmic-facing. The chain crosses the membrane as a helical span at residues Gly360–Leu380. At Pro381–Thr386 the chain is on the periplasmic side. Residues Leu387–Leu407 traverse the membrane as a helical segment. Over Leu408–Leu423 the chain is Cytoplasmic.

Belongs to the SEDS family. FtsW subfamily.

The protein localises to the cell inner membrane. It catalyses the reaction [GlcNAc-(1-&gt;4)-Mur2Ac(oyl-L-Ala-gamma-D-Glu-L-Lys-D-Ala-D-Ala)](n)-di-trans,octa-cis-undecaprenyl diphosphate + beta-D-GlcNAc-(1-&gt;4)-Mur2Ac(oyl-L-Ala-gamma-D-Glu-L-Lys-D-Ala-D-Ala)-di-trans,octa-cis-undecaprenyl diphosphate = [GlcNAc-(1-&gt;4)-Mur2Ac(oyl-L-Ala-gamma-D-Glu-L-Lys-D-Ala-D-Ala)](n+1)-di-trans,octa-cis-undecaprenyl diphosphate + di-trans,octa-cis-undecaprenyl diphosphate + H(+). The protein operates within cell wall biogenesis; peptidoglycan biosynthesis. Its function is as follows. Peptidoglycan polymerase that is essential for cell division. In Polynucleobacter necessarius subsp. necessarius (strain STIR1), this protein is Probable peptidoglycan glycosyltransferase FtsW.